We begin with the raw amino-acid sequence, 445 residues long: MKNPEAQQDVSVSQGFRMLFYTMKPSETSFQTLEEVPDYVKKATPFFISLMLLELVVSWILKGKPPGRLDDALTSISAGVLSRLPSLFFRSIELTSYIYIWENYRLFNLPWDSPWTWYSAFLGVDFGYYWFHRMAHEVNIMWAGHQTHHSSEDYNLSTALRQSVLQIYTSWIFYSPLALFIPPSVYAVHLQFNLLYQFWIHTEVINNLGPLELILNTPSHHRVHHGRNRYCIDKNYAGVLIIWDKIFGTFEAENEKVVYGLTHPINTFEPIKVQFHHLFSIWTTFWATPGFFNKFSVIFKGPGWGPGKPRLGLSEEIPEVTGKEVPFSSSSSQLLKIYTVVQFALMLAFYEETFADTAALSQVTLLLRVCFIILTLTSIGFLLDQRPKAAIMETLRCLMFLMLYRFGHLKPLVPSLSSAFEIVFSICIAFWGVRSMKQLTSHPWK.

The next 2 membrane-spanning stretches (helical) occupy residues 43-63 (ATPF…ILKG) and 111-131 (WDSP…YYWF). Residues 120–249 (AFLGVDFGYY…LIIWDKIFGT (130 aa)) enclose the Fatty acid hydroxylase domain. Positions 132–136 (HRMAH) match the Histidine box-1 motif. Residues 145–149 (HQTHH) carry the Histidine box-2 motif. The Histidine box-3 motif lies at 221–225 (HRVHH). 3 consecutive transmembrane segments (helical) span residues 334–354 (LLKI…EETF), 363–383 (VTLL…GFLL), and 413–433 (VPSL…FWGV).

The protein belongs to the sterol desaturase family. TMEM195 subfamily. It depends on Fe cation as a cofactor.

It is found in the endoplasmic reticulum membrane. It catalyses the reaction 1-O-(1,2-saturated-alkyl)-sn-glycerol + (6R)-L-erythro-5,6,7,8-tetrahydrobiopterin + O2 = a 1-(1-hydroxyalkyl)-sn-glycerol + (6R)-L-erythro-6,7-dihydrobiopterin + H2O. In terms of biological role, glyceryl-ether monooxygenase that cleaves the O-alkyl bond of ether lipids. Ether lipids are essential components of brain membranes. This Homo sapiens (Human) protein is Alkylglycerol monooxygenase (AGMO).